We begin with the raw amino-acid sequence, 280 residues long: Putative ABC transporter ATP-binding protein PYRAB03730 (280 aa).

In terms of domain architecture, ABC transporter spans 4–244 (IEVENVSFKY…VEFLERIGIR (241 aa)). ATP is bound at residue 38–45 (GPSGSGKS).

This sequence belongs to the ABC transporter superfamily.

It localises to the cell membrane. In terms of biological role, probably part of an ABC transporter complex. Responsible for energy coupling to the transport system. This Pyrococcus abyssi (strain GE5 / Orsay) protein is Putative ABC transporter ATP-binding protein PYRAB03730.